Consider the following 738-residue polypeptide: 1,4-alpha-glucan branching enzyme GlgB (738 aa).

The active-site Nucleophile is the D399. The active-site Proton donor is the E452.

This sequence belongs to the glycosyl hydrolase 13 family. GlgB subfamily. Monomer.

The catalysed reaction is Transfers a segment of a (1-&gt;4)-alpha-D-glucan chain to a primary hydroxy group in a similar glucan chain.. It functions in the pathway glycan biosynthesis; glycogen biosynthesis. Catalyzes the formation of the alpha-1,6-glucosidic linkages in glycogen by scission of a 1,4-alpha-linked oligosaccharide from growing alpha-1,4-glucan chains and the subsequent attachment of the oligosaccharide to the alpha-1,6 position. The polypeptide is 1,4-alpha-glucan branching enzyme GlgB (Chlamydia trachomatis serovar L2b (strain UCH-1/proctitis)).